The primary structure comprises 257 residues: uncharacterized protein (257 aa).

Residues 6 to 26 form a helical membrane-spanning segment; it reads IFWLNLAAIIIISIVVSGDMF.

The protein belongs to the staphylococcal tandem lipoprotein family.

Its subcellular location is the cell membrane. This is an uncharacterized protein from Staphylococcus aureus (strain NCTC 8325 / PS 47).